The chain runs to 551 residues: Interleukin-2 receptor subunit beta (551 aa).

A signal peptide spans 1-26 (MAAPALSWRLPLLILLLPLATSWASA). The Extracellular segment spans residues 27–240 (AVNGTSQFTC…TKPAALGKDT (214 aa)). 3 N-linked (GlcNAc...) asparagine glycosylation sites follow: asparagine 29, asparagine 43, and asparagine 71. Intrachain disulfides connect cysteine 36-cysteine 46, cysteine 59-cysteine 110, and cysteine 74-cysteine 86. The Fibronectin type-III domain occupies 134-234 (APISLQVVHV…QPLAFRTKPA (101 aa)). An N-linked (GlcNAc...) asparagine glycan is attached at asparagine 149. The WSXWS motif motif lies at 220 to 224 (WSPWS). The chain crosses the membrane as a helical span at residues 241 to 265 (IPWLGHLLVGLSGAFGFIILVYLLI). Residues 266–551 (NCRNTGPWLK…LQGQDPTHLV (286 aa)) are Cytoplasmic-facing. A Box 1 motif motif is present at residues 278-286 (LKCNTPDPS). 2 disordered regions span residues 389-416 (EEDPDEGVAGAPTGSSPQPLQPLSGEDD) and 432-486 (PSLL…VDFQ).

This sequence belongs to the type I cytokine receptor family. Type 4 subfamily. In terms of assembly, non-covalent dimer of an alpha and a beta subunit. IL2R exists in 3 different forms: a high affinity dimer, an intermediate affinity monomer (beta subunit), and a low affinity monomer (alpha subunit). The high and intermediate affinity forms also associate with a gamma subunit. Interacts with SHB upon interleukin stimulation. (Microbial infection) Interacts with HTLV-1 accessory protein p12I.

Its subcellular location is the cell membrane. In terms of biological role, receptor for interleukin-2. This beta subunit is involved in receptor mediated endocytosis and transduces the mitogenic signals of IL2. Probably in association with IL15RA, involved in the stimulation of neutrophil phagocytosis by IL15. This chain is Interleukin-2 receptor subunit beta, found in Homo sapiens (Human).